Reading from the N-terminus, the 4924-residue chain is Hydroxamate-type ferrichrome siderophore peptide synthetase (4924 aa).

Carrier domains are found at residues 715–791, 2172–2246, 3254–3328, and 4402–4478; these read NQSE…ILLK, DGFQ…KRRR, NVVE…NTQT, and IHLN…QYEK. O-(pantetheine 4'-phosphoryl)serine occurs at positions 752, 2206, 3288, and 4439.

It belongs to the ATP-dependent AMP-binding enzyme family.

The protein resides in the cytoplasm. Its function is as follows. Involved in intracellular and extracellular ferrichrome siderophore biosynthesis. In Schizosaccharomyces pombe (strain 972 / ATCC 24843) (Fission yeast), this protein is Hydroxamate-type ferrichrome siderophore peptide synthetase (sib1).